The sequence spans 261 residues: tRNA U34 carboxymethyltransferase (261 aa).

Residues Lys25, Trp39, Lys44, Gly63, 114–115, Tyr135, and Arg250 contribute to the carboxy-S-adenosyl-L-methionine site; that span reads VE.

This sequence belongs to the class I-like SAM-binding methyltransferase superfamily. CmoB family. As to quaternary structure, homotetramer.

It catalyses the reaction carboxy-S-adenosyl-L-methionine + 5-hydroxyuridine(34) in tRNA = 5-carboxymethoxyuridine(34) in tRNA + S-adenosyl-L-homocysteine + H(+). Its function is as follows. Catalyzes carboxymethyl transfer from carboxy-S-adenosyl-L-methionine (Cx-SAM) to 5-hydroxyuridine (ho5U) to form 5-carboxymethoxyuridine (cmo5U) at position 34 in tRNAs. This is tRNA U34 carboxymethyltransferase from Helicobacter pylori (strain J99 / ATCC 700824) (Campylobacter pylori J99).